Consider the following 267-residue polypeptide: 3-isopropylmalate dehydratase large subunit (267 aa).

Residues cysteine 146, cysteine 206, and cysteine 209 each contribute to the [4Fe-4S] cluster site.

The protein belongs to the aconitase/IPM isomerase family. LeuC type 1 subfamily. In terms of assembly, heterodimer of LeuC and LeuD. It depends on [4Fe-4S] cluster as a cofactor.

The enzyme catalyses (2R,3S)-3-isopropylmalate = (2S)-2-isopropylmalate. It functions in the pathway amino-acid biosynthesis; L-leucine biosynthesis; L-leucine from 3-methyl-2-oxobutanoate: step 2/4. Catalyzes the isomerization between 2-isopropylmalate and 3-isopropylmalate, via the formation of 2-isopropylmaleate. This Cupriavidus necator (Alcaligenes eutrophus) protein is 3-isopropylmalate dehydratase large subunit (leuC).